A 112-amino-acid chain; its full sequence is UPF0060 membrane protein CMS0846 (112 aa).

4 helical membrane passes run 6 to 26, 32 to 52, 61 to 81, and 87 to 107; these read VILF…IWQA, PFWW…IATL, ILAA…TVVD, and RWDV…MAAP.

This sequence belongs to the UPF0060 family.

The protein localises to the cell membrane. In Clavibacter sepedonicus (Clavibacter michiganensis subsp. sepedonicus), this protein is UPF0060 membrane protein CMS0846.